We begin with the raw amino-acid sequence, 532 residues long: Glucose-6-phosphate isomerase (532 aa).

The active-site Proton donor is the glutamate 330. Active-site residues include histidine 359 and lysine 461.

The protein belongs to the GPI family.

The protein resides in the cytoplasm. It carries out the reaction alpha-D-glucose 6-phosphate = beta-D-fructose 6-phosphate. The protein operates within carbohydrate biosynthesis; gluconeogenesis. It functions in the pathway carbohydrate degradation; glycolysis; D-glyceraldehyde 3-phosphate and glycerone phosphate from D-glucose: step 2/4. Catalyzes the reversible isomerization of glucose-6-phosphate to fructose-6-phosphate. The sequence is that of Glucose-6-phosphate isomerase from Synechococcus sp. (strain CC9902).